We begin with the raw amino-acid sequence, 152 residues long: MFRGAQAINLDTKGRIAIPTRYRPELLAENQGQLICTVDIRQPCLLLYPLKEWEIIEQKLCQLANFDPAQRSVQRVMSGYATECELDSAGRILLSAPLRQRAKLEKTIMLVGQLNKFEIWSETEWQAQIERDLELGLSGELATSDALKMLSL.

SpoVT-AbrB domains are found at residues 5–52 (AQAI…PLKE) and 81–124 (ATEC…SETE).

This sequence belongs to the MraZ family. Forms oligomers.

It is found in the cytoplasm. Its subcellular location is the nucleoid. The polypeptide is Transcriptional regulator MraZ (Mannheimia succiniciproducens (strain KCTC 0769BP / MBEL55E)).